Here is a 305-residue protein sequence, read N- to C-terminus: UDP-3-O-acyl-N-acetylglucosamine deacetylase (305 aa).

3 residues coordinate Zn(2+): His79, His238, and Asp242. The Proton donor role is filled by His265.

The protein belongs to the LpxC family. The cofactor is Zn(2+).

The catalysed reaction is a UDP-3-O-[(3R)-3-hydroxyacyl]-N-acetyl-alpha-D-glucosamine + H2O = a UDP-3-O-[(3R)-3-hydroxyacyl]-alpha-D-glucosamine + acetate. It functions in the pathway glycolipid biosynthesis; lipid IV(A) biosynthesis; lipid IV(A) from (3R)-3-hydroxytetradecanoyl-[acyl-carrier-protein] and UDP-N-acetyl-alpha-D-glucosamine: step 2/6. Catalyzes the hydrolysis of UDP-3-O-myristoyl-N-acetylglucosamine to form UDP-3-O-myristoylglucosamine and acetate, the committed step in lipid A biosynthesis. The polypeptide is UDP-3-O-acyl-N-acetylglucosamine deacetylase (Klebsiella pneumoniae (strain 342)).